Consider the following 341-residue polypeptide: Barley B recombinant-like protein A (341 aa).

A compositionally biased stretch (basic residues) spans 48–62 (HQHQQHVPHHHHQPH). Disordered stretches follow at residues 48-95 (HQHQ…MNFA) and 150-234 (MQQQ…RKNI). Positions 68 to 77 (GANGNANGGA) are enriched in low complexity. A compositionally biased stretch (pro residues) spans 78 to 90 (MPPPPATEAPPSM). A compositionally biased stretch (basic residues) spans 190-211 (PKKRQQGRQPKVPRAKKPKKSA).

It belongs to the BBR/BPC family.

The protein resides in the nucleus. In terms of biological role, transcriptional regulator that specifically binds to GA-rich elements (GAGA-repeats) present in regulatory sequences of genes involved in developmental processes. This chain is Barley B recombinant-like protein A, found in Oryza sativa subsp. japonica (Rice).